Consider the following 401-residue polypeptide: Protein nanos (401 aa).

Positions 181-207 are disordered; it reads LGRMSYGSAPPQVQMPPQQQHQQQQGL. The segment covering 190 to 205 has biased composition (low complexity); sequence PPQVQMPPQQQHQQQQ. The Nanos-type zinc finger occupies 318-372; the sequence is HCVFCENNNEPEAVINSHSVRDNFNRVLCPKLRTYVCPICGASGDSAHTIKYCPK. Zn(2+) is bound by residues cysteine 319, cysteine 322, histidine 335, cysteine 346, cysteine 354, cysteine 357, histidine 365, and cysteine 370. 2 short sequence motifs (C2HC) span residues 319–346 and 354–370; these read CVFCENNNEPEAVINSHSVRDNFNRVLC and CPICGASGDSAHTIKYC.

The protein belongs to the nanos family. As to quaternary structure, interacts with pum and brat. Interacts with cup. Interacts with mei-P26; possibly involved in regulation of brat levels. Interacts with wh; may be involved in mei-P26-dependent derepression of the BMP signaling pathway. Acts via the formation of a quaternary complex composed of pum, nanos, brat and the 3'-UTR mRNA of hb. Binds RNA with no specificity. As to expression, posterior part of the embryo. While the transcript is present throughout the embryo, nanos translation is controlled by smg, and the protein is found in pole plasm and pole cells. In the female ovary expressed in germline stem cells, precystoblasts and in maturing cystoblasts; in early cystoblasts expression is post-transcriptionally repressed by bam in a 3'UTR-dependent manner.

The protein resides in the cytoplasm. Its subcellular location is the cytoplasmic ribonucleoprotein granule. Functionally, maternal RNA-binding protein that is required for germ cells proliferation and self-renewal. Acts by forming a complex with pum and brat that regulates translation and mRNA stability. The complex binds to the Nanos Response Element (NRE), a 16 bp sequence in the hb mRNA 3'-UTR and prevents its translation. Controls posterior development. Rescuing factor for the abdominal defect of posterior group mutants. The other posterior group genes are not required for nanos function but rather play a role in localization or distribution of nanos protein. The sequence is that of Protein nanos from Drosophila melanogaster (Fruit fly).